The chain runs to 320 residues: 1-aminocyclopropane-1-carboxylate oxidase 3 (320 aa).

Residues 111–131 (NEYRLAMKDFGKRLEILAEEL) adopt a coiled-coil conformation. One can recognise a Fe2OG dioxygenase domain in the interval 155–256 (GPTFATKLSN…RMSIASFYNP (102 aa)). Residues histidine 180, aspartate 182, and histidine 237 each coordinate Fe cation. Arginine 247 contacts 2-oxoglutarate.

Belongs to the iron/ascorbate-dependent oxidoreductase family. The cofactor is Fe(2+).

The catalysed reaction is 1-aminocyclopropane-1-carboxylate + L-ascorbate + O2 = ethene + L-dehydroascorbate + hydrogen cyanide + CO2 + 2 H2O. Its pathway is alkene biosynthesis; ethylene biosynthesis via S-adenosyl-L-methionine; ethylene from S-adenosyl-L-methionine: step 2/2. In terms of biological role, enzyme involved in the ethylene biosynthesis. May promote stem elongation by maximizing the extensibility cells, possibly by activating ethylene biosynthesis, in response to very-long-chain fatty acids (VLCFAs C20:0 to C30:0). This is 1-aminocyclopropane-1-carboxylate oxidase 3 from Arabidopsis thaliana (Mouse-ear cress).